Reading from the N-terminus, the 387-residue chain is 8-amino-7-oxononanoate synthase (387 aa).

R31 and R38 together coordinate substrate. 118 to 119 (GY) is a pyridoxal 5'-phosphate binding site. H143 serves as a coordination point for substrate. Pyridoxal 5'-phosphate contacts are provided by residues S191, 216–219 (DDAH), and 236–239 (TLSK). K239 carries the post-translational modification N6-(pyridoxal phosphate)lysine. T348 is a substrate binding site.

It belongs to the class-II pyridoxal-phosphate-dependent aminotransferase family. BioF subfamily. Homodimer. Requires pyridoxal 5'-phosphate as cofactor.

It catalyses the reaction 6-carboxyhexanoyl-[ACP] + L-alanine + H(+) = (8S)-8-amino-7-oxononanoate + holo-[ACP] + CO2. Its pathway is cofactor biosynthesis; biotin biosynthesis. Catalyzes the decarboxylative condensation of pimeloyl-[acyl-carrier protein] and L-alanine to produce 8-amino-7-oxononanoate (AON), [acyl-carrier protein], and carbon dioxide. This chain is 8-amino-7-oxononanoate synthase, found in Methylorubrum populi (strain ATCC BAA-705 / NCIMB 13946 / BJ001) (Methylobacterium populi).